Here is a 361-residue protein sequence, read N- to C-terminus: Tyrosine--tRNA ligase (361 aa).

Positions 36, 162, 166, 169, and 184 each coordinate L-tyrosine. The 'KMSKS' region signature appears at 236-240; it reads KMSKS. Lys-239 contributes to the ATP binding site.

This sequence belongs to the class-I aminoacyl-tRNA synthetase family. TyrS type 4 subfamily. As to quaternary structure, homodimer.

The protein resides in the cytoplasm. The catalysed reaction is tRNA(Tyr) + L-tyrosine + ATP = L-tyrosyl-tRNA(Tyr) + AMP + diphosphate + H(+). Its function is as follows. Catalyzes the attachment of tyrosine to tRNA(Tyr) in a two-step reaction: tyrosine is first activated by ATP to form Tyr-AMP and then transferred to the acceptor end of tRNA(Tyr). The sequence is that of Tyrosine--tRNA ligase from Saccharolobus islandicus (strain L.S.2.15 / Lassen #1) (Sulfolobus islandicus).